The chain runs to 524 residues: Casein kinase I homolog 3 (524 aa).

In terms of domain architecture, Protein kinase spans 14–319; the sequence is YAVGPKIGEG…YLISLMDDAL (306 aa). ATP-binding positions include 20 to 28 and K60; that span reads IGEGSFGVI. The active-site Proton acceptor is D150. Disordered regions lie at residues 352–414 and 427–474; these read HGYG…KQQH and PETH…EHNL. Residues 360–373 are compositionally biased toward low complexity; that stretch reads RVNGNTARNNVNTN. Polar residues-rich tracts occupy residues 374–413 and 429–474; these read SKTRNTTPVATPKQQAQNSYNKDNSKSRISSNPQSFTKQQ and THSN…EHNL. Positions 444-447 match the YXXZ targeting signal motif; that stretch reads YDSI. S-palmitoyl cysteine attachment occurs at residues C517, C518, C519, C520, C522, C523, and C524.

It belongs to the protein kinase superfamily. CK1 Ser/Thr protein kinase family. Casein kinase I subfamily.

The protein resides in the cell membrane. It is found in the nucleus membrane. The protein localises to the vacuole membrane. The enzyme catalyses L-seryl-[protein] + ATP = O-phospho-L-seryl-[protein] + ADP + H(+). It catalyses the reaction L-threonyl-[protein] + ATP = O-phospho-L-threonyl-[protein] + ADP + H(+). Its function is as follows. Casein kinases are operationally defined by their preferential utilization of acidic proteins such as caseins as substrates. Phosphorylates MON1, inhibiting the guanine nucleotide exchange factor activity of the MON1-CCZ1 complex, possibly by preventing its recruitment to membranes by small GTPase RAB5 homologs. In Saccharomyces cerevisiae (strain ATCC 204508 / S288c) (Baker's yeast), this protein is Casein kinase I homolog 3 (YCK3).